Consider the following 542-residue polypeptide: CTP synthase (542 aa).

Residues 1–265 (MARYVFITGG…DSEVLSAFGI (265 aa)) are amidoligase domain. Residue S13 coordinates CTP. S13 contributes to the UTP binding site. Residue 14 to 19 (SLGKGI) coordinates ATP. Y54 lines the L-glutamine pocket. Residue D71 coordinates ATP. Residues D71 and E139 each coordinate Mg(2+). CTP is bound by residues 146–148 (DIE), 186–191 (KTKPTQ), and K222. UTP-binding positions include 186–191 (KTKPTQ) and K222. In terms of domain architecture, Glutamine amidotransferase type-1 spans 291–541 (TIAVVGKYTG…IEAAIEQSRL (251 aa)). G353 contacts L-glutamine. C380 (nucleophile; for glutamine hydrolysis) is an active-site residue. Residues 381–384 (FGMQ), E404, and R469 contribute to the L-glutamine site. Catalysis depends on residues H514 and E516.

The protein belongs to the CTP synthase family. As to quaternary structure, homotetramer.

The enzyme catalyses UTP + L-glutamine + ATP + H2O = CTP + L-glutamate + ADP + phosphate + 2 H(+). It carries out the reaction L-glutamine + H2O = L-glutamate + NH4(+). The catalysed reaction is UTP + NH4(+) + ATP = CTP + ADP + phosphate + 2 H(+). Its pathway is pyrimidine metabolism; CTP biosynthesis via de novo pathway; CTP from UDP: step 2/2. Allosterically activated by GTP, when glutamine is the substrate; GTP has no effect on the reaction when ammonia is the substrate. The allosteric effector GTP functions by stabilizing the protein conformation that binds the tetrahedral intermediate(s) formed during glutamine hydrolysis. Inhibited by the product CTP, via allosteric rather than competitive inhibition. Its function is as follows. Catalyzes the ATP-dependent amination of UTP to CTP with either L-glutamine or ammonia as the source of nitrogen. Regulates intracellular CTP levels through interactions with the four ribonucleotide triphosphates. This is CTP synthase from Brucella melitensis biotype 2 (strain ATCC 23457).